We begin with the raw amino-acid sequence, 401 residues long: Ufm1-specific protease 2 (401 aa).

Catalysis depends on residues Cys234, Asp358, and His360.

The protein belongs to the peptidase C78 family.

The protein localises to the endoplasmic reticulum. Its subcellular location is the cytoplasm. It is found in the nucleus. Its function is as follows. Thiol-dependent isopeptidase that specifically cleaves UFM1, a ubiquitin-like modifier protein, from conjugated proteins. While it is also able to mediate the processing of UFM1 precursors, a prerequisite for conjugation reactions, ufsp2 mainly acts as a protein deUFMylase that mediates deconjugation of UFM1 from target proteins. The polypeptide is Ufm1-specific protease 2 (Danio rerio (Zebrafish)).